The primary structure comprises 405 residues: Putative phosphate permease PYRAB14010 (405 aa).

The next 11 membrane-spanning stretches (helical) occupy residues 3 to 23 (MDPW…AIGA), 44 to 64 (AVLI…KTVT), 82 to 102 (VLVY…VIAT), 114 to 134 (IIGG…VNWG), 138 to 158 (SVVL…FFIF), 181 to 201 (VWIG…VLHG), 207 to 227 (GVLK…SMIL), 264 to 284 (VANA…GMAG), 287 to 307 (VPVP…GVAT), 329 to 349 (FTID…GMPI), and 384 to 404 (FVTV…LWIV).

This sequence belongs to the inorganic phosphate transporter (PiT) (TC 2.A.20) family.

The protein resides in the cell membrane. In terms of biological role, potential transporter for phosphate. The chain is Putative phosphate permease PYRAB14010 from Pyrococcus abyssi (strain GE5 / Orsay).